Reading from the N-terminus, the 121-residue chain is Small ribosomal subunit protein uS13 (121 aa).

The segment at 94-121 is disordered; it reads SLPVRGQNTKNNSRTRKGPRRTVANKKK. A compositionally biased stretch (basic residues) spans 106 to 121; the sequence is SRTRKGPRRTVANKKK.

The protein belongs to the universal ribosomal protein uS13 family. As to quaternary structure, part of the 30S ribosomal subunit. Forms a loose heterodimer with protein S19. Forms two bridges to the 50S subunit in the 70S ribosome.

In terms of biological role, located at the top of the head of the 30S subunit, it contacts several helices of the 16S rRNA. In the 70S ribosome it contacts the 23S rRNA (bridge B1a) and protein L5 of the 50S subunit (bridge B1b), connecting the 2 subunits; these bridges are implicated in subunit movement. Contacts the tRNAs in the A and P-sites. The protein is Small ribosomal subunit protein uS13 of Exiguobacterium sp. (strain ATCC BAA-1283 / AT1b).